The chain runs to 490 residues: Nicotinate phosphoribosyltransferase (490 aa).

The residue at position 206 (histidine 206) is a Phosphohistidine.

It belongs to the NAPRTase family. In terms of processing, transiently phosphorylated on a His residue during the reaction cycle. Phosphorylation strongly increases the affinity for substrates and increases the rate of nicotinate D-ribonucleotide production. Dephosphorylation regenerates the low-affinity form of the enzyme, leading to product release.

It catalyses the reaction nicotinate + 5-phospho-alpha-D-ribose 1-diphosphate + ATP + H2O = nicotinate beta-D-ribonucleotide + ADP + phosphate + diphosphate. The protein operates within cofactor biosynthesis; NAD(+) biosynthesis; nicotinate D-ribonucleotide from nicotinate: step 1/1. Catalyzes the synthesis of beta-nicotinate D-ribonucleotide from nicotinate and 5-phospho-D-ribose 1-phosphate at the expense of ATP. This Bacillus subtilis (strain 168) protein is Nicotinate phosphoribosyltransferase (pncB).